Consider the following 127-residue polypeptide: Protein yippee-like 4 (127 aa).

A Yippee domain is found at 27–124 (RTYSCVHCRA…IEMSHMVKDN (98 aa)). Cys-31, Cys-34, Cys-87, and Cys-90 together coordinate Zn(2+). Phosphothreonine is present on residues Thr-92 and Thr-93. A Phosphotyrosine modification is found at Tyr-98.

This sequence belongs to the yippee family.

It is found in the nucleus. The protein resides in the nucleolus. This Chlorocebus aethiops (Green monkey) protein is Protein yippee-like 4 (YPEL4).